A 498-amino-acid polypeptide reads, in one-letter code: Lipase 3 (498 aa).

The cysteines at positions 60 and 91 are disulfide-linked. N-linked (GlcNAc...) asparagine glycosylation is present at Asn-193. Residue Ser-200 is the Acyl-ester intermediate of the active site. The N-linked (GlcNAc...) asparagine glycan is linked to Asn-384. Catalysis depends on His-409, which acts as the Charge relay system. Residue Asn-418 is glycosylated (N-linked (GlcNAc...) asparagine).

The protein belongs to the type-B carboxylesterase/lipase family.

It catalyses the reaction a triacylglycerol + H2O = a diacylglycerol + a fatty acid + H(+). This Yarrowia lipolytica (strain CLIB 122 / E 150) (Yeast) protein is Lipase 3 (LIP3).